The following is a 150-amino-acid chain: Large ribosomal subunit protein eL19 (150 aa).

The tract at residues 55-89 (IKGQSRYRAKIRHEQKKKGRHRGPGSRKGKKTARM) is disordered.

Belongs to the eukaryotic ribosomal protein eL19 family. Part of the 50S ribosomal subunit.

In terms of biological role, binds to the 23S rRNA. This is Large ribosomal subunit protein eL19 from Pyrococcus furiosus (strain ATCC 43587 / DSM 3638 / JCM 8422 / Vc1).